A 289-amino-acid chain; its full sequence is Glycine-rich RNA-binding protein 5, mitochondrial (289 aa).

The transit peptide at 1–31 (MAFLSKVGRLFSQTSSHVTASSSMLQSIRCM) directs the protein to the mitochondrion. Positions 34–111 (SKIFVGGISY…RRIRVNYATE (78 aa)) constitute an RRM domain. The tract at residues 219 to 289 (QGSSTNAGFD…TDDGDVAKRA (71 aa)) is disordered. The span at 257–272 (GSDNQFGDAENGNTEN) shows a compositional bias: polar residues.

The protein belongs to the GR-RBP family. In terms of assembly, homodimer. Interacts with MORF8/RIP1 AND RBG3/ORRM3. Binds to RBG2/ORRM5.

It is found in the mitochondrion. Possibly has a role in RNA transcription or processing during stress. Binds RNAs and DNAs sequence with a preference to single-stranded nucleic acids. Displays strong affinity to poly(U) sequence. Involved in C-to-U editing of mitochondrial RNA. Functions as a major mitochondrial editing factor. Controls 44 percent of the mitochondrial editing sites. The chain is Glycine-rich RNA-binding protein 5, mitochondrial from Arabidopsis thaliana (Mouse-ear cress).